A 188-amino-acid chain; its full sequence is Small ribosomal subunit protein uS12m (188 aa).

The N-terminal 63 residues, 1-63 (MSGGRWISNL…AAFRLPQSSG (63 aa)), are a transit peptide targeting the mitochondrion.

Belongs to the universal ribosomal protein uS12 family.

Its subcellular location is the mitochondrion. Its function is as follows. Protein S12 is involved in the translation initiation step. This Oenothera elata subsp. hookeri (Hooker's evening primrose) protein is Small ribosomal subunit protein uS12m (RPS12).